Reading from the N-terminus, the 287-residue chain is ATP synthase gamma chain (287 aa).

This sequence belongs to the ATPase gamma chain family. F-type ATPases have 2 components, CF(1) - the catalytic core - and CF(0) - the membrane proton channel. CF(1) has five subunits: alpha(3), beta(3), gamma(1), delta(1), epsilon(1). CF(0) has three main subunits: a, b and c.

The protein resides in the cell inner membrane. Produces ATP from ADP in the presence of a proton gradient across the membrane. The gamma chain is believed to be important in regulating ATPase activity and the flow of protons through the CF(0) complex. The protein is ATP synthase gamma chain of Parabacteroides distasonis (strain ATCC 8503 / DSM 20701 / CIP 104284 / JCM 5825 / NCTC 11152).